The primary structure comprises 260 residues: 1-(5-phosphoribosyl)-5-[(5-phosphoribosylamino)methylideneamino] imidazole-4-carboxamide isomerase (260 aa).

Aspartate 8 serves as the catalytic Proton acceptor. The active-site Proton donor is the aspartate 130.

It belongs to the HisA/HisF family.

It is found in the cytoplasm. It catalyses the reaction 1-(5-phospho-beta-D-ribosyl)-5-[(5-phospho-beta-D-ribosylamino)methylideneamino]imidazole-4-carboxamide = 5-[(5-phospho-1-deoxy-D-ribulos-1-ylimino)methylamino]-1-(5-phospho-beta-D-ribosyl)imidazole-4-carboxamide. Its pathway is amino-acid biosynthesis; L-histidine biosynthesis; L-histidine from 5-phospho-alpha-D-ribose 1-diphosphate: step 4/9. This is 1-(5-phosphoribosyl)-5-[(5-phosphoribosylamino)methylideneamino] imidazole-4-carboxamide isomerase from Chlorobaculum tepidum (strain ATCC 49652 / DSM 12025 / NBRC 103806 / TLS) (Chlorobium tepidum).